Here is a 235-residue protein sequence, read N- to C-terminus: Cobalt transport protein CbiM (235 aa).

The first 33 residues, 1–33 (MRYLKFFLLLVFLVPSFGFSMHIMEGFLPPTHA), serve as a signal peptide directing secretion. The next 6 membrane-spanning stretches (helical) occupy residues 34-51 (LIWY…LFTI), 63-83 (MLLA…IPSV), 95-115 (LGAI…VLLF), 118-138 (LLLA…MAIV), 156-176 (NIAV…TTSF), and 199-219 (IFAI…VVVI).

The protein belongs to the CbiM family. Forms an energy-coupling factor (ECF) transporter complex composed of an ATP-binding protein (A component, CbiO), a transmembrane protein (T component, CbiQ) and 2 possible substrate-capture proteins (S components, CbiM and CbiN) of unknown stoichimetry.

It is found in the cell inner membrane. The protein operates within cofactor biosynthesis; adenosylcobalamin biosynthesis. Functionally, part of the energy-coupling factor (ECF) transporter complex CbiMNOQ involved in cobalt import. The chain is Cobalt transport protein CbiM from Thermosipho melanesiensis (strain DSM 12029 / CIP 104789 / BI429).